A 130-amino-acid chain; its full sequence is uncharacterized protein (130 aa).

The N-terminal stretch at 1–23 (MINRKVVYALSALLLFVYSYAFI) is a signal peptide.

This is an uncharacterized protein from Aquifex aeolicus (strain VF5).